The following is a 747-amino-acid chain: Polyribonucleotide nucleotidyltransferase (747 aa).

Residues Asp-502 and Asp-508 each contribute to the Mg(2+) site. A KH domain is found at 569-628 (PRMLTITIDPDKIRDIIGPGGKIIKKIIEETGVEIDVEDDGRVFIASTDAAAGERALKII). An S1 motif domain is found at 638 to 712 (GKVYNGKVTR…PQGRLKLSRK (75 aa)). The interval 718–747 (STVGEGGHRHFRRAGREGGHRGLNNRRQSR) is disordered.

It belongs to the polyribonucleotide nucleotidyltransferase family. Mg(2+) serves as cofactor.

The protein resides in the cytoplasm. The enzyme catalyses RNA(n+1) + phosphate = RNA(n) + a ribonucleoside 5'-diphosphate. Its function is as follows. Involved in mRNA degradation. Catalyzes the phosphorolysis of single-stranded polyribonucleotides processively in the 3'- to 5'-direction. The chain is Polyribonucleotide nucleotidyltransferase from Moorella thermoacetica (strain ATCC 39073 / JCM 9320).